Consider the following 148-residue polypeptide: Large ribosomal subunit protein uL15 (148 aa).

The span at 1–12 (MSDPIKLHDLRP) shows a compositional bias: basic and acidic residues. Positions 1–45 (MSDPIKLHDLRPAKGANKAKTRVGRGEASKGKTAGRGTKGTKARN) are disordered.

This sequence belongs to the universal ribosomal protein uL15 family. As to quaternary structure, part of the 50S ribosomal subunit.

Binds to the 23S rRNA. This chain is Large ribosomal subunit protein uL15, found in Corynebacterium urealyticum (strain ATCC 43042 / DSM 7109).